The following is a 141-amino-acid chain: uncharacterized protein (141 aa).

This is an uncharacterized protein from Saccharomyces cerevisiae (strain ATCC 204508 / S288c) (Baker's yeast).